Here is a 184-residue protein sequence, read N- to C-terminus: Endoribonuclease YbeY (184 aa).

Zn(2+) contacts are provided by His-118, His-122, and His-128.

It belongs to the endoribonuclease YbeY family. The cofactor is Zn(2+).

The protein localises to the cytoplasm. In terms of biological role, single strand-specific metallo-endoribonuclease involved in late-stage 70S ribosome quality control and in maturation of the 3' terminus of the 16S rRNA. The polypeptide is Endoribonuclease YbeY (Nocardia farcinica (strain IFM 10152)).